The primary structure comprises 273 residues: 4-hydroxy-tetrahydrodipicolinate reductase (273 aa).

NAD(+) contacts are provided by residues 8-13 (GALGRM), Asp-35, 103-105 (GTT), and 129-132 (SQNY). His-161 functions as the Proton donor/acceptor in the catalytic mechanism. Residue His-162 coordinates (S)-2,3,4,5-tetrahydrodipicolinate. Residue Lys-165 is the Proton donor of the active site. Position 171-172 (171-172 (GT)) interacts with (S)-2,3,4,5-tetrahydrodipicolinate.

Belongs to the DapB family.

The protein localises to the cytoplasm. The enzyme catalyses (S)-2,3,4,5-tetrahydrodipicolinate + NAD(+) + H2O = (2S,4S)-4-hydroxy-2,3,4,5-tetrahydrodipicolinate + NADH + H(+). The catalysed reaction is (S)-2,3,4,5-tetrahydrodipicolinate + NADP(+) + H2O = (2S,4S)-4-hydroxy-2,3,4,5-tetrahydrodipicolinate + NADPH + H(+). It functions in the pathway amino-acid biosynthesis; L-lysine biosynthesis via DAP pathway; (S)-tetrahydrodipicolinate from L-aspartate: step 4/4. In terms of biological role, catalyzes the conversion of 4-hydroxy-tetrahydrodipicolinate (HTPA) to tetrahydrodipicolinate. In Methanococcus aeolicus (strain ATCC BAA-1280 / DSM 17508 / OCM 812 / Nankai-3), this protein is 4-hydroxy-tetrahydrodipicolinate reductase.